A 520-amino-acid polypeptide reads, in one-letter code: Ubiquitin carboxyl-terminal hydrolase 3 (520 aa).

Met-1 is modified (N-acetylmethionine). The segment at 1–121 adopts a UBP-type zinc-finger fold; the sequence is MECPHLSSSV…QKVREHLQNL (121 aa). Residues Cys-3, His-5, Cys-29, Cys-32, Cys-41, Cys-44, Cys-49, His-56, His-60, His-82, Cys-95, and Cys-98 each coordinate Zn(2+). The 353-residue stretch at 159–511 folds into the USP domain; it reads TGLRNLGNTC…KAYILFYVEH (353 aa). Cys-168 acts as the Nucleophile in catalysis. His-471 acts as the Proton acceptor in catalysis.

This sequence belongs to the peptidase C19 family. USP3 subfamily. In terms of assembly, interacts (via UBP-type domain) with H2A; the interaction is less efficient than with monoubiquitinated H2A. As to expression, expressed in all tissues examined, with strongest expression in pancreas.

The protein localises to the nucleus. It is found in the cytoplasm. It catalyses the reaction Thiol-dependent hydrolysis of ester, thioester, amide, peptide and isopeptide bonds formed by the C-terminal Gly of ubiquitin (a 76-residue protein attached to proteins as an intracellular targeting signal).. In terms of biological role, deubiquitinase that plays a role in several cellular processes including transcriptional regulation, cell cycle progression or innate immunity. In response to DNA damage, deubiquitinates monoubiquitinated target proteins such as histone H2A and H2AX and thereby counteracts RNF168- and RNF8-mediated ubiquitination. In turn, participates in the recruitment of DNA damage repair factors to DNA break sites. Required for proper progression through S phase and subsequent mitotic entry. Acts as a positive regulator of TP53 by deubiquitinating and stabilizing it to promote normal cell proliferation and transformation. Participates in establishing tolerance innate immune memory through non-transcriptional feedback. Mechanistically, negatively regulates TLR-induced NF-kappa-B signaling by targeting and removing the 'Lys-63'-linked polyubiquitin chains on MYD88. Negatively regulates the activation of type I interferon signaling by mediating 'Lys-63'-linked polyubiquitin chains on RIGI and IFIH1. Also deubiquinates ASC/PYCARD, the central adapter mediating the assembly and activation of most inflammasomes, and thereby promotes inflammasome activation. The protein is Ubiquitin carboxyl-terminal hydrolase 3 (USP3) of Homo sapiens (Human).